The sequence spans 340 residues: MSIIDPVNKSKVPQEWINKSNIPGDELEEGIMSGMLVVLSDGSILKRGYTTGTTATVAAKAAVLSLKKEIDHVSVPTPVGLRAHMDVKAKDGHAVAVKLNNDHESDITRGLEFVARAVESDKITITAGEGIGIVTRGGLQSKKGYPAINPRPMQQIMEAVVEAVEEIGIKGASVEISLPRGAEIAKQTLNGRIGVEGGISILGTTGFVEPWNDHLGEMKSDLIRDAAKVVLTTGRIGIRYSTMLFPDYTVVLAGSRISEFMESATGKVAICGLPGLVLKWGDPDMLKDSGFATVSEMIEVEPQGEHIRRAFEKTVEKGKGARIVVVDRDGTVLMDSGEQE.

The protein belongs to the CbiD family.

The enzyme catalyses Co-precorrin-5B + S-adenosyl-L-methionine = Co-precorrin-6A + S-adenosyl-L-homocysteine. It participates in cofactor biosynthesis; adenosylcobalamin biosynthesis; cob(II)yrinate a,c-diamide from sirohydrochlorin (anaerobic route): step 6/10. In terms of biological role, catalyzes the methylation of C-1 in cobalt-precorrin-5B to form cobalt-precorrin-6A. This is Cobalt-precorrin-5B C(1)-methyltransferase from Methanococcoides burtonii (strain DSM 6242 / NBRC 107633 / OCM 468 / ACE-M).